Reading from the N-terminus, the 343-residue chain is Multidrug resistance protein MdtN (343 aa).

The Cytoplasmic portion of the chain corresponds to 1–12 (MESTPKKAPRSK). The chain crosses the membrane as a helical; Signal-anchor for type II membrane protein span at residues 13–33 (FPALLVVALALVALVFVIWRV). Residues 34–343 (DSAPSTNDAY…ASAVANLEPQ (310 aa)) lie on the Periplasmic side of the membrane.

The protein belongs to the membrane fusion protein (MFP) (TC 8.A.1) family. Could be part of a tripartite efflux system composed of MdtN, MdtO and MdtP.

Its subcellular location is the cell inner membrane. In terms of biological role, could be involved in resistance to puromycin, acriflavine and tetraphenylarsonium chloride. The polypeptide is Multidrug resistance protein MdtN (mdtN) (Shigella flexneri).